We begin with the raw amino-acid sequence, 261 residues long: MIPMFKKKPLIGMVHLKPLPGSYHYNDNFDDIVDFAIKEAKKLEEAGFDAVMIENFGDAPFKKEADKITIASMAVIAKAIKEEVSLPLGINILRNDAIGAYSIAYVVKADFIRVNVLSGVAFTDQGIIEGKAYELAKLKKLLPSKIKVFADVHVKHAYHFIDFESSLLDTVERGLADAVIISGKRTGKEVDIEKLKLAKELVDVPVIVGSGTNYNNLRILWSYADGFIIGTWIKKDGKANNEIDIDRAKKIVNLANKLKMC.

The protein belongs to the BtpA family.

This is an uncharacterized protein from Methanocaldococcus jannaschii (strain ATCC 43067 / DSM 2661 / JAL-1 / JCM 10045 / NBRC 100440) (Methanococcus jannaschii).